A 921-amino-acid chain; its full sequence is Probable TonB-dependent receptor NMB1497 (921 aa).

The first 25 residues, methionine 1–alanine 25, serve as a signal peptide directing secretion. The 122-residue stretch at aspartate 53 to leucine 174 folds into the TBDR plug domain. The 737-residue stretch at threonine 185–phenylalanine 921 folds into the TBDR beta-barrel domain. A TonB C-terminal box motif is present at residues leucine 904–phenylalanine 921.

Belongs to the TonB-dependent receptor family.

Its subcellular location is the cell outer membrane. In terms of biological role, probable receptor, TonB-dependent. The polypeptide is Probable TonB-dependent receptor NMB1497 (Neisseria meningitidis serogroup B (strain ATCC BAA-335 / MC58)).